A 193-amino-acid polypeptide reads, in one-letter code: Thymidine kinase (193 aa).

Residues 9–16 (STMNAGKS) and 87–90 (DEAN) contribute to the ATP site. The active-site Proton acceptor is E88. The Zn(2+) site is built by C145, C147, C182, and H185.

The protein belongs to the thymidine kinase family. As to quaternary structure, homotetramer.

Its subcellular location is the cytoplasm. The enzyme catalyses thymidine + ATP = dTMP + ADP + H(+). In Agrobacterium fabrum (strain C58 / ATCC 33970) (Agrobacterium tumefaciens (strain C58)), this protein is Thymidine kinase.